A 129-amino-acid polypeptide reads, in one-letter code: MTLAVKCPILGFEETKNMEFSTIDEVFVRLKSLDGKDFSFVLINPYLIRPDYEFDIPTYYQELLSLTPESNMKIFNIVAIAKSIEESTVNFLAPVVINLDNNTMAQVILDTVNYPDFFQADQIANYIKK.

Belongs to the FliW family. In terms of assembly, interacts with translational regulator CsrA and flagellin(s).

The protein localises to the cytoplasm. Acts as an anti-CsrA protein, binds CsrA and prevents it from repressing translation of its target genes, one of which is flagellin. Binds to flagellin and participates in the assembly of the flagellum. The sequence is that of Flagellar assembly factor FliW from Campylobacter jejuni subsp. doylei (strain ATCC BAA-1458 / RM4099 / 269.97).